The primary structure comprises 281 residues: Lectin CaBo (281 aa).

The N-terminal stretch at 1 to 29 (MAISKKSSLYLPIFTFITMLLMVVNKVSS) is a signal peptide. D119 provides a ligand contact to Ca(2+). Residue R139 participates in a carbohydrate binding. A propeptide spans 149 to 163 (IIKNSTTIDFNAAYN) (removed in mature form). Residues E171 and D173 each coordinate Mn(2+). Ca(2+) contacts are provided by D173, Y175, N177, and D182. Residue Y175 coordinates a carbohydrate. Mn(2+)-binding residues include D182 and H187. 262 to 263 (LY) serves as a coordination point for a carbohydrate.

It belongs to the leguminous lectin family. In terms of assembly, equilibrium between homodimer and homotetramer. Post-translationally, the mature chain consists of residues 164-281 followed by residues 30-148. Concanavalin A-like lectins of the Diocleinae subtribe undergo proteolytic processing referred to as circular permutation. The propeptide is split into an N-terminal and a C-terminal part, the gamma and beta chain, respectively. These are then religated in beta-gamma order to form the mature alpha chain. The beta and gamma chains can often be detected in cell extracts.

In terms of biological role, D-mannose-specific lectin. The polypeptide is Lectin CaBo (Canavalia bonariensis).